We begin with the raw amino-acid sequence, 65 residues long: Large ribosomal subunit protein uL29 (65 aa).

It belongs to the universal ribosomal protein uL29 family.

This is Large ribosomal subunit protein uL29 from Lactobacillus delbrueckii subsp. bulgaricus (strain ATCC 11842 / DSM 20081 / BCRC 10696 / JCM 1002 / NBRC 13953 / NCIMB 11778 / NCTC 12712 / WDCM 00102 / Lb 14).